The chain runs to 86 residues: Large ribosomal subunit protein bL27 (86 aa).

The segment at 1–22 (MAHKKAGGSSRNGRDSESKRLG) is disordered.

It belongs to the bacterial ribosomal protein bL27 family.

The protein is Large ribosomal subunit protein bL27 of Acidithiobacillus ferrooxidans (strain ATCC 23270 / DSM 14882 / CIP 104768 / NCIMB 8455) (Ferrobacillus ferrooxidans (strain ATCC 23270)).